The following is a 380-amino-acid chain: Protein-tyrosine sulfotransferase A (380 aa).

The Cytoplasmic portion of the chain corresponds to 1–6 (MRKNRE). The chain crosses the membrane as a helical; Signal-anchor for type II membrane protein span at residues 7–27 (LLLVLFLVVFILFYFITARTA). Over 28-380 (DDPYYSNHRE…PIVDNEVSKL (353 aa)) the chain is Lumenal. N-linked (GlcNAc...) asparagine glycosylation is present at N66. 79–83 (RSGTT) lines the 3'-phosphoadenylyl sulfate pocket. C97 and C157 form a disulfide bridge. The Proton donor/acceptor role is filled by E100. An interaction with peptide substrate region spans residues 102–106 (RVIPR). 3 residues coordinate 3'-phosphoadenylyl sulfate: R184, S192, and R196. C226 and C234 are joined by a disulfide. Residues Y239, 284–293 (SSDQVVKPVN), and K299 each bind 3'-phosphoadenylyl sulfate.

Belongs to the protein sulfotransferase family.

Its subcellular location is the golgi apparatus membrane. It carries out the reaction L-tyrosyl-[protein] + 3'-phosphoadenylyl sulfate = O-sulfo-L-tyrosine-[protein] + adenosine 3',5'-bisphosphate + H(+). In terms of biological role, catalyzes the O-sulfation of tyrosine residues within acidic motifs of polypeptides, using 3'-phosphoadenylyl sulfate (PAPS) as cosubstrate. This chain is Protein-tyrosine sulfotransferase A (tpst-1), found in Caenorhabditis elegans.